Consider the following 378-residue polypeptide: Erythronate-4-phosphate dehydrogenase (378 aa).

Substrate-binding residues include S45 and T66. 2 residues coordinate NAD(+): D146 and T175. R208 is an active-site residue. D232 contacts NAD(+). E237 is a catalytic residue. The active-site Proton donor is H254. Residue G257 coordinates NAD(+). Position 258 (Y258) interacts with substrate.

The protein belongs to the D-isomer specific 2-hydroxyacid dehydrogenase family. PdxB subfamily. In terms of assembly, homodimer.

It is found in the cytoplasm. The enzyme catalyses 4-phospho-D-erythronate + NAD(+) = (R)-3-hydroxy-2-oxo-4-phosphooxybutanoate + NADH + H(+). The protein operates within cofactor biosynthesis; pyridoxine 5'-phosphate biosynthesis; pyridoxine 5'-phosphate from D-erythrose 4-phosphate: step 2/5. Functionally, catalyzes the oxidation of erythronate-4-phosphate to 3-hydroxy-2-oxo-4-phosphonooxybutanoate. The protein is Erythronate-4-phosphate dehydrogenase of Citrobacter koseri (strain ATCC BAA-895 / CDC 4225-83 / SGSC4696).